We begin with the raw amino-acid sequence, 206 residues long: Isochorismatase family protein 1A (206 aa).

The protein belongs to the isochorismatase family.

This is Isochorismatase family protein 1A from Dictyostelium discoideum (Social amoeba).